The sequence spans 4644 residues: MSETGGGEDGSAGLEVSAVQNVADVSVLQKHLRKLVPLLLEDGGDAPAALEAALEEKSALEQMRKFLSDPQVHTVLVERSTLKEDVGDEGEEEKEFISYNINIDIHYGVKSNSLAFIKRAPVIDADKPVSSQLRVLTLSEDSPYETLHSFISNAVAPFFKSYIRESGKADRDGDKMAPSVEKKIAELEMGLLHLQQNIEIPEISLPIHPIITNVAKQCYERGEKPKVTDFGDKVEDPTFLNQLQSGVNRWIREIQKVTKLDRDPASGTALQEISFWLNLERALYRIQEKRESPEVLLTLDILKHGKRFHATVSFDTDTGLKQALETVNDYNPLMKDFPLNDLLSATELDKIRQALVAIFTHLRKIRNTKYPIQRALRLVEAISRDLSSQLLKVLGTRKLMHVAYEEFEKVMVACFEVFQTWDDEYEKLQVLLRDIVKRKREENLKMVWRINPAHRKLQARLDQMRKFRRQHEQLRAVIVRVLRPQVTAVAQQNQGEAPEPQDMKVAEVLFDAADANAIEEVNLAYENVKEVDGLDVSKEGTEAWEAAMKRYDERIDRVETRITARLRDQLGTAKNANEMFRIFSRFNALFVRPHIRGAIREYQTQLIQRVKDDIESLHDKFKVQYPQSQACKMSHVRDLPPVSGSIIWAKQIDRQLTAYMKRVEDVLGKGWENHVEGQKLKQDGDSFRMKLNTQEIFDDWARKVQQRNLGVSGRIFTIESARVRGRSGNVLKLKVNFLPEIITLSKEVRNLKWLGFRVPLAIVNKAHQANQLYPFAISLIESVRTYERTCEKVEERNTISLLVAGLKKEVQALIAEGIALVWESYKLDPYVQRLAETVFNFQEKVDDLLIIEEKIDLEVRSLETCMYDHKTFSEILNRVQKAVDDLNLHSYSNLPIWVNKLDMEIERILGVRLQAGLRAWTQVLLGQAEDKAEVDMDTDAPQVSHKPGGEPKIKNVVHELRITNQVIYLNPPIEECRYKLYQEMFAWKMIVLSLPRIQSQRYQVGVHYELTEEEKFYRNALTRSRDGPVALEESYSAVMGIVTEVEQYVKVWLQYQCLWDMQAENIYNRLGEDLSKWQALLVQIRRARGTFDNAETKKEFGPVVIDYGKVQSKVNLKYDSWHKEVLSKFGQMLGSNMTEFHSQISKSRQELEQHSVDTASTSDAVTFITYVQSLKRKIKQFEKQVELYRNGQRLLEKQRFQFPPSWLYIDNIEGEWGAFNDIMRRKDSAIQQQVANLQMKIVQEDRAVESRTTDLLTDWEKTKPVTGNLRPEEALQALTIYEGKFGRLKDDREKCAKAKEALELTDTGLLSGSEERVQVALEELQDLKGVWSELSKVWEQIDQMKEQPWVSVQPRKLRQNLDGLLNQLKNFPARLRQYASYEFVQRLLKGYMKINMLVIELKSEALKDRHWKQLMKRLHVNWVVSELTLGQIWDVDLQKNEAIVKDVLLVAQGEMALEEFLKQIREVWNTYELDLVNYQNKCRLIRGWDDLFNKVKEHINSVSAMKLSPYYKVFEEDALSWEDKLNRIMALFDVWIDVQRRWVYLEGIFTGSADIKHLLPVETQRFQSISTEFLALMKKVSKSPLVMDVLNIQGVQRSLERLADLLGKIQKALGEYLERERSSFPRFYFVGDEDLLEIIGNSKNVAKLQKHFKKMFAGVSSIILNEDSSVVLGISSREGEEVMFKTPVSITEHPKINEWLTLVEKEMRVTLAKLLAESVTEVEIFGKATSIDPNTYITWIDKYQAQLVVLSAQIAWSENVENALSNVGGGGNVGPLQSVLSNVEVTLNVLADSVLMEQPPLRRRKLEHLITELVHQRDVTRSLIKSKIDNAKSFEWLSQMRFYFDPKQTDVLQQLSIQMANAKFNYGFEYLGVQDKLVQTPLTDRCYLTMTQALEARLGGSPFGPAGTGKTESVKALGHQLGRFVLVFNCDETFDFQAMGRIFVGLCQVGAWGCFDEFNRLEERMLSAVSQQVQCIQEALREHSNPNYDKTSAPITCELLNKQVKVSPDMAIFITMNPGYAGRSNLPDNLKKLFRSLAMTKPDRQLIAQVMLYSQGFRTAEVLANKIVPFFKLCDEQLSSQSHYDFGLRALKSVLVSPGNVKRERIQKIKREKEERGEAVDEGEIAENLPEQEILIQSFCETMVPKLVAEDIPLLFSLLSDVFPGVQYHRGEMTDLREELKKVCKEMYLTYGDGEEVGGMWVEKVLQLYQITQINHGLMMVGPSGSGKSMAWRVLLKALERLEGVEGVAHIIDPKAISKDHLYGTLDPNTREWTDGLFTHVLRKIIDNVRGELQKRQWIVFDGDVDPEWVENLNSVLDDNKLLTLPNGERLSLPPNVRIMFEVQDLKYATLATVSRCGMVWFSEDLLSTDMIFNNFLARLRTIPLDEGEDEAQRRRKGKEDEGEEAASPMLQIQRDAATIMQPYFTSNGLVTKALEHAFKLEHIMDLTRLRCLGSLFSMLHQGCRNVAQYNANHPDFPMQIEQLERYIQRYLVYAILWSLSGDSRLKMRAELGEYIRRITTVPLPTAPNIPIIDYEVSISGEWSPWQAKVPQIEVETHKVAAPDVVVPTLDTVRHEALLYTWLAEHKPLVLCGPPGSGKTMTLFSALRALPDMEVVGLNFSSATTPELLLKTFDHYCEYRRTPNGVVLAPVQLGKWLVLFCDEINLPDMDKYGTQRVISFIRQMVEHGGFYRTSDQTWVKLERIQFVGACNPPTDPGRKPLSHRFLRHVPVVYVDYPGPASLTQIYGTFNRAMLRLIPSLRTYAEPLTAAMVEFYTMSQERFTQDTQPHYIYSPREMTRWVRGIFEALRPLETLPVEGLIRIWAHEALRLFQDRLVEDEERRWTDENIDMVALKHFPNIDKEKAMSRPILYSNWLSKDYIPVDQEELRDYVKARLKVFYEEELDVPLVLFNEVLDHVLRIDRIFRQPQGHLLLIGVSGAGKTTLSRFVAWMNGLSVYQIKVHRKYTGEDFDEDLRTVLRRSGCKNEKIAFIMDESNVLDSGFLERMNTLLANGEVPGLFEGDEYATLMTQCKEGAQKEGLMLDSHEELYKWFTSQVIRNLHVVFTMNPSSEGLKDRAATSPALFNRCVLNWFGDWSTEALYQVGKEFTSKMDLEKPNYIVPDYMPVVYDKLPQPPTHREAIVNSCVFVHQTLHQANARLAKRGGRTMAITPRHYLDFINHYANLFHEKRSELEEQQMHLNVGLRKIKETVDQVEELRRALRIKSQELEVKNAAANDKLKKMVKDQQEAEKKKVMSQEIQEQLHKQQEVIADKQMSVKEDLDKVEPAVIEAQNAVKSIKKQHLVEVRSMANPPAAVKLALESICLLLGESTTDWKQIRSIIMRENFIPTIVNFSAEEISDAIREKMKKNYMSNPSYNYEIVNRASLACGPMVKWAIAQLNYADMLKRVEPLRNELQKLEDDAKDNQQKANEVEQMIRDLEASIARYKEEYAVLISEAQAIKADLAAVEAKVNRSTALLKSLSAERERWEKTSETFKNQMSTIAGDCLLSAAFIAYAGYFDQQMRQNLFTTWSHHLQQANIQFRTDIARTEYLSNADERLRWQASSLPADDLCTENAIMLKRFNRYPLIIDPSGQATEFIMNEYKDRKITRTSFLDDAFRKNLESALRFGNPLLVQDVESYDPVLNPVLNREVRRTGGRVLITLGDQDIDLSPSFVIFLSTRDPTVEFPPDLCSRVTFVNFTVTRSSLQSQCLNEVLKAERPDVDEKRSDLLKLQGEFQLRLRQLEKSLLQALNEVKGRILDDDTIITTLENLKREAAEVTRKVEETDIVMQEVETVSQQYLPLSTACSSIYFTMESLKQVHFLYQYSLQFFLDIYHNVLYENPNLKGATDHTQRLSVITKDLFQVAFNRVARGMLHQDHITFAMLLARIKLKGTMGEPTYDAEFQHFLRGKEIVLSAGSTPKVQGLTVEQAEAVARLSCLPAFKDLIAKVQADEQFGIWLESSSPEQTVPYLWTEETPATPIGQAIHRLLLIQAFRPDRLLAMAHMFVSTNLGESFMSIMEQPLDLTHIVGTEVKPNTPVLMCSVPGYDASGHVEDLAAEQNTQITSIAIGSAEGFNQADKAINTAVKSGRWVMLKNVHLAPGWLMQLEKKLHSLQPHACFRLFLTMEINPRVPVNLLRAGRIFVFEPPPGVKANMLRTFSSIPVSRMCKSPNERARLYFLLAWFHAVIQERLRYAPLGWSKKYEFGESDLRSACDTVDTWLDDTAKGRQNISPDKIPWSALKTLMAQSIYGGRVDNEFDQRLLNTFLERLFTTRSFDSEFKLACKVDGHKDIQMPDGIRREEFVQWVELLPDAQTPSWLGLPNNAERVLLTTQGVDMISKMLKMQMLEDEDDLAYAETEKKTRTDFTSDGRPAWMRTLHTTASNWLHLIPQTLSPLKRTVENIKDPLFRFFEREVKMGAKLLQDVRQDLADVVQVCEGKKKQTNYLRTLINELVKGILPRSWSHYTVPAGMTVIQWVSDFSERIKQLQNISQAAAAGGAKELKNIHVCLGALFVPEAYITATRQYVAQANSWSLEELCLEVNVTASQSTTLDACSFGVTGLKLQGATCSNNKLSLSNAISTVLPLTQLRWGKQTSAEKKASVVTLPVYLNFTRADLIFTVDFEIATKEDPRSFYERGVAVLCTE.

S2 is modified (N-acetylserine). A stem region spans residues 2–1865 (SETGGGEDGS…SIQMANAKFN (1864 aa)). Coiled-coil stretches lie at residues 48 to 69 (AALE…FLSD), 179 to 200 (SVEK…NIEI), 453 to 476 (AHRK…QLRA), and 541 to 564 (TEAW…RITA). S68 bears the Phosphoserine mark. An interaction with DYNC1I2 region spans residues 446 to 701 (MVWRINPAHR…NTQEIFDDWA (256 aa)). Positions 649 to 800 (AKQIDRQLTA…EKVEERNTIS (152 aa)) are interaction with DYNC1LI2. K1123 is subject to N6-acetyllysine. Residues 1169–1201 (TYVQSLKRKIKQFEKQVELYRNGQRLLEKQRFQ) are a coiled coil. S1228 is subject to Phosphoserine. 2 coiled-coil regions span residues 1229–1250 (AIQQ…AVES) and 1355–1371 (RKLR…LKNF). 4 AAA regions span residues 1866 to 2097 (YGFE…VLVS), 2178 to 2450 (EELK…LTRL), 2554 to 2803 (EVET…WVRG), and 2897 to 3166 (VFYE…GGRT). Residues 1904 to 1911 (GPAGTGKT) and 2222 to 2229 (GPSGSGKS) each bind ATP. Residues 2389–2409 (EDEAQRRRKGKEDEGEEAASP) are disordered. ATP is bound by residues 2593 to 2600 (GPPGSGKT) and 2935 to 2942 (GVSGAGKT). Coiled-coil stretches lie at residues 3187 to 3273 (EKRS…ADKQ), 3394 to 3498 (AIAQ…KNQM), and 3735 to 3798 (EFQL…VSQQ). The segment at 3187–3498 (EKRSELEEQQ…KTSETFKNQM (312 aa)) is stalk. The residue at position 3478 (K3478) is an N6-acetyllysine. AAA regions lie at residues 3551–3780 (LSNA…EVTR) and 4003–4219 (AHMF…TVDT). S4160 is modified (phosphoserine). K4281 carries the post-translational modification N6-acetyllysine. A Phosphothreonine modification is found at T4364.

This sequence belongs to the dynein heavy chain family. As to quaternary structure, homodimer. The cytoplasmic dynein 1 complex consists of two catalytic heavy chains (HCs) and a number of non-catalytic subunits presented by intermediate chains (ICs), light intermediate chains (LICs) and light chains (LCs); the composition seems to vary in respect to the IC, LIC and LC composition. The heavy chain homodimer serves as a scaffold for the probable homodimeric assembly of the respective non-catalytic subunits. The ICs and LICs bind directly to the HC dimer and dynein LCs assemble on the IC dimer. Interacts with DYNC1LI1; DYNC1LI1 and DYNC1LI2 bind mutually exclusive to DYNC1H1. Interacts with DYNC1LI2; DYNC1LI1 and DYNC1LI2 bind mutually exclusive to DYNC1H1. Interacts with DYNC1I2. Interacts with BICD2. Interacts with DNALI1.

The protein resides in the cytoplasm. Its subcellular location is the cytoskeleton. In terms of biological role, cytoplasmic dynein 1 acts as a motor for the intracellular retrograde motility of vesicles and organelles along microtubules. Dynein has ATPase activity; the force-producing power stroke is thought to occur on release of ADP. Plays a role in mitotic spindle assembly and metaphase plate congression. In Rattus norvegicus (Rat), this protein is Cytoplasmic dynein 1 heavy chain 1 (Dync1h1).